Consider the following 833-residue polypeptide: cGMP-specific 3',5'-cyclic phosphodiesterase (833 aa).

A Phosphoserine modification is found at Ser60. The tract at residues 82-101 is disordered; it reads FLSDSGKKEQMPLTSPRFDS. 2 GAF domains span residues 122 to 272 and 304 to 461; these read DVTA…GIVL and SLEV…GLGI. Residues 494-818 enclose the PDEase domain; it reads ETRELQALAA…QKWQALADQQ (325 aa). The Proton donor role is filled by His571. Residues His575, His611, Asp612, and Asp722 each coordinate Zn(2+). Asp612 contributes to the Mg(2+) binding site. A 3',5'-cyclic GMP-binding site is contributed by Gln775.

This sequence belongs to the cyclic nucleotide phosphodiesterase family. It depends on Zn(2+) as a cofactor. Mg(2+) is required as a cofactor. Phosphorylation is regulated by binding of cGMP to the two allosteric sites. Phosphorylation by PRKG1 leads to its activation.

The catalysed reaction is 3',5'-cyclic GMP + H2O = GMP + H(+). It functions in the pathway purine metabolism; 3',5'-cyclic GMP degradation; GMP from 3',5'-cyclic GMP: step 1/1. In terms of biological role, plays a role in signal transduction by regulating the intracellular concentration of cyclic nucleotides. This phosphodiesterase catalyzes the specific hydrolysis of cGMP to 5'-GMP. Specifically regulates nitric-oxide-generated cGMP. This is cGMP-specific 3',5'-cyclic phosphodiesterase (Pde5a) from Rattus norvegicus (Rat).